Consider the following 158-residue polypeptide: Arginine repressor (158 aa).

Belongs to the ArgR family.

The protein resides in the cytoplasm. It functions in the pathway amino-acid biosynthesis; L-arginine biosynthesis [regulation]. Functionally, regulates arginine biosynthesis genes. The polypeptide is Arginine repressor (Phocaeicola vulgatus (strain ATCC 8482 / DSM 1447 / JCM 5826 / CCUG 4940 / NBRC 14291 / NCTC 11154) (Bacteroides vulgatus)).